The chain runs to 519 residues: Iroquois-class homeodomain protein IRX-4 (519 aa).

Residues 143–204 (GTRRKNATRE…NARRRLKKEN (62 aa)) constitute a DNA-binding region (homeobox; TALE-type). Residues 204-298 (NKMTWPPRNK…VPAAPDGPVK (95 aa)) are disordered. The segment covering 213 to 222 (KCADEKRPYA) has biased composition (basic and acidic residues). 2 stretches are compositionally biased toward acidic residues: residues 223–235 (EGEE…EEAR) and 257–267 (LSDLDDFDPLE).

Belongs to the TALE/IRO homeobox family. As to quaternary structure, interacts with the vitamin D receptor VDR but doesn't affect its transactivation activity. As to expression, predominantly expressed in cardiac ventricles.

Its subcellular location is the nucleus. In terms of biological role, likely to be an important mediator of ventricular differentiation during cardiac development. The protein is Iroquois-class homeodomain protein IRX-4 (IRX4) of Homo sapiens (Human).